The following is a 266-amino-acid chain: Transcription factor BIP1 (266 aa).

Positions 1 to 73 are disordered; it reads MAMYMPSTAS…DREAQRAIRA (73 aa). 2 stretches are compositionally biased toward polar residues: residues 7–22 and 47–56; these read STAS…SGTP and RSVSTLTPSQ. Residues 54-95 enclose the bZIP domain; the sequence is PSQLARKRANDREAQRAIRARTKEHIERLEREVEELKSKQNR. The interval 59–81 is basic motif; it reads RKRANDREAQRAIRARTKEHIER. The span at 61 to 73 shows a compositional bias: basic and acidic residues; it reads RANDREAQRAIRA. The tract at residues 82–89 is leucine-zipper; the sequence is LEREVEEL.

Belongs to the bZIP family. As to expression, expressed in appressoria.

It localises to the nucleus. Functionally, transcription factor that is required for infection of plants hosts. Is not implicated in the development of appressoria or the subsequent penetration of host leaves, but is necessary for the initial establishment of the fungus within plant cells by orchestrating the expression of a unique set of early invasion-related genes within appressoria, encoding secreted effectors, enzymes, secondary metabolism-related enzymes, and signaling membrane receptors. Controls the expression of targeted genes by interacting directly with a 5'-TGACTC-3' motif present in their promoters. This chain is Transcription factor BIP1, found in Pyricularia oryzae (strain 70-15 / ATCC MYA-4617 / FGSC 8958) (Rice blast fungus).